A 256-amino-acid polypeptide reads, in one-letter code: Stanniocalcin (256 aa).

The signal sequence occupies residues 1 to 18 (MLAKFGLCAVFLVLGTAA). A propeptide spanning residues 19–33 (TFDTDPEEASPRRAR) is cleaved from the precursor. Residue Asn-62 is glycosylated (N-linked (GlcNAc...) asparagine). The disordered stretch occupies residues 204–241 (QGSNQGPNSAPAGWRWPMGSPPSFKIQPSMRGRDPTHL).

It belongs to the stanniocalcin family. Homodimer; disulfide-linked. As to expression, produced and secreted by the corpuscles of Stannius.

The protein resides in the secreted. Its function is as follows. Its primary function is the prevention of hypercalcemia. Upon release into the circulation, it lowers calcium transport by the gills, thereby reducing its rate of influx from the environment into the extracellular compartment. STC also stimulates phosphate reabsorption by renal proximal tubules. The consequence of this action is increased levels of plasma phosphate, which combines with excess calcium and promotes its disposal into bone and scales. This Oncorhynchus mykiss (Rainbow trout) protein is Stanniocalcin (stc).